The sequence spans 324 residues: uncharacterized protein (324 aa).

This is an uncharacterized protein from Borreliella burgdorferi (strain ATCC 35210 / DSM 4680 / CIP 102532 / B31) (Borrelia burgdorferi).